Here is a 347-residue protein sequence, read N- to C-terminus: Tsukushi (347 aa).

The signal sequence occupies residues 1-19 (MASLLCLFFSLLGLAAIGA). Residues 20–61 (VKNCHPQCRCEVETFGLFDSFSLTKVDCSRIGPGNTPVPIPL) enclose the LRRNT domain. LRR repeat units lie at residues 62-83 (DTSH…MLSG), 88-109 (TLVS…AFSK), 112-133 (YLET…CFTG), 135-156 (PLVE…LFTT), 160-175 (DLPI…LTSI), 185-205 (YIKS…LNGI), 206-227 (PLQY…AFDS), 230-252 (ELVH…AFRS), 255-277 (NLQA…VFSG), and 280-301 (SLQE…VFMQ). Asparagine 285 carries an N-linked (GlcNAc...) asparagine glycan.

As to quaternary structure, forms a ternary complex with chordin/CHRD and BMP4.

It localises to the secreted. Its function is as follows. Contributes to various developmental events through its interactions with multiple signaling pathways. Dorsalizing factor which functions as an inhibitor of bone morphogenetic proteins during gastrulation. The chain is Tsukushi (tsku) from Danio rerio (Zebrafish).